Consider the following 222-residue polypeptide: GTP cyclohydrolase 1 (222 aa).

Cysteine 111, histidine 114, and cysteine 182 together coordinate Zn(2+).

Belongs to the GTP cyclohydrolase I family. Homomer.

It carries out the reaction GTP + H2O = 7,8-dihydroneopterin 3'-triphosphate + formate + H(+). Its pathway is cofactor biosynthesis; 7,8-dihydroneopterin triphosphate biosynthesis; 7,8-dihydroneopterin triphosphate from GTP: step 1/1. The sequence is that of GTP cyclohydrolase 1 from Klebsiella pneumoniae (strain 342).